Here is a 451-residue protein sequence, read N- to C-terminus: Trigger factor (451 aa).

One can recognise a PPIase FKBP-type domain in the interval 163–248 (GDIIDMEYTV…IKALYANILP (86 aa)).

It belongs to the FKBP-type PPIase family. Tig subfamily.

It localises to the cytoplasm. It carries out the reaction [protein]-peptidylproline (omega=180) = [protein]-peptidylproline (omega=0). In terms of biological role, involved in protein export. Acts as a chaperone by maintaining the newly synthesized protein in an open conformation. Functions as a peptidyl-prolyl cis-trans isomerase. The sequence is that of Trigger factor from Leptospira interrogans serogroup Icterohaemorrhagiae serovar copenhageni (strain Fiocruz L1-130).